The sequence spans 422 residues: 3-carboxy-cis,cis-muconate cycloisomerase (422 aa).

It belongs to the class-II fumarase/aspartase family. In terms of assembly, homotetramer.

The protein localises to the cytoplasm. The enzyme catalyses 2-(carboxymethyl)-5-oxo-2,5-dihydro-2-furoate = 3-carboxy-cis,cis-muconate + H(+). It participates in aromatic compound metabolism; beta-ketoadipate pathway; 5-oxo-4,5-dihydro-2-furylacetate from 3-carboxy-cis,cis-muconate: step 1/2. Functionally, catalyzes an anti cycloisomerization. The sequence is that of 3-carboxy-cis,cis-muconate cycloisomerase (pcaB) from Pseudomonas putida (Arthrobacter siderocapsulatus).